Reading from the N-terminus, the 259-residue chain is Ribosomal RNA small subunit methyltransferase J (259 aa).

Residues 101–102, 117–118, 153–154, and Asp-176 contribute to the S-adenosyl-L-methionine site; these read RD, ER, and SS.

It belongs to the methyltransferase superfamily. RsmJ family.

It is found in the cytoplasm. It catalyses the reaction guanosine(1516) in 16S rRNA + S-adenosyl-L-methionine = N(2)-methylguanosine(1516) in 16S rRNA + S-adenosyl-L-homocysteine + H(+). Functionally, specifically methylates the guanosine in position 1516 of 16S rRNA. In Vibrio parahaemolyticus serotype O3:K6 (strain RIMD 2210633), this protein is Ribosomal RNA small subunit methyltransferase J.